The chain runs to 95 residues: Aspartyl/glutamyl-tRNA(Asn/Gln) amidotransferase subunit C (95 aa).

This sequence belongs to the GatC family. Heterotrimer of A, B and C subunits.

It catalyses the reaction L-glutamyl-tRNA(Gln) + L-glutamine + ATP + H2O = L-glutaminyl-tRNA(Gln) + L-glutamate + ADP + phosphate + H(+). The catalysed reaction is L-aspartyl-tRNA(Asn) + L-glutamine + ATP + H2O = L-asparaginyl-tRNA(Asn) + L-glutamate + ADP + phosphate + 2 H(+). Allows the formation of correctly charged Asn-tRNA(Asn) or Gln-tRNA(Gln) through the transamidation of misacylated Asp-tRNA(Asn) or Glu-tRNA(Gln) in organisms which lack either or both of asparaginyl-tRNA or glutaminyl-tRNA synthetases. The reaction takes place in the presence of glutamine and ATP through an activated phospho-Asp-tRNA(Asn) or phospho-Glu-tRNA(Gln). The polypeptide is Aspartyl/glutamyl-tRNA(Asn/Gln) amidotransferase subunit C (Prosthecochloris aestuarii (strain DSM 271 / SK 413)).